A 156-amino-acid chain; its full sequence is Small ribosomal subunit protein uS7 (156 aa).

The protein belongs to the universal ribosomal protein uS7 family. Part of the 30S ribosomal subunit. Contacts proteins S9 and S11.

Its function is as follows. One of the primary rRNA binding proteins, it binds directly to 16S rRNA where it nucleates assembly of the head domain of the 30S subunit. Is located at the subunit interface close to the decoding center, probably blocks exit of the E-site tRNA. The polypeptide is Small ribosomal subunit protein uS7 (Beutenbergia cavernae (strain ATCC BAA-8 / DSM 12333 / CCUG 43141 / JCM 11478 / NBRC 16432 / NCIMB 13614 / HKI 0122)).